Consider the following 292-residue polypeptide: ATP synthase gamma chain (292 aa).

This sequence belongs to the ATPase gamma chain family. F-type ATPases have 2 components, CF(1) - the catalytic core - and CF(0) - the membrane proton channel. CF(1) has five subunits: alpha(3), beta(3), gamma(1), delta(1), epsilon(1). CF(0) has three main subunits: a, b and c.

It localises to the cell inner membrane. Functionally, produces ATP from ADP in the presence of a proton gradient across the membrane. The gamma chain is believed to be important in regulating ATPase activity and the flow of protons through the CF(0) complex. The chain is ATP synthase gamma chain from Nitrobacter winogradskyi (strain ATCC 25391 / DSM 10237 / CIP 104748 / NCIMB 11846 / Nb-255).